The sequence spans 99 residues: DNA-binding protein Fis (99 aa).

The disordered stretch occupies residues 1–25; that stretch reads MFEQKISSEALTTTTSIPATGQITQ. Positions 75-94 form a DNA-binding region, H-T-H motif; it reads QTRAATMLGINRGTLRKKLK.

It belongs to the transcriptional regulatory Fis family. As to quaternary structure, homodimer.

In terms of biological role, activates ribosomal RNA transcription. Plays a direct role in upstream activation of rRNA promoters. The sequence is that of DNA-binding protein Fis from Psychromonas ingrahamii (strain DSM 17664 / CCUG 51855 / 37).